Consider the following 4684-residue polypeptide: Plectin (4684 aa).

The globular 1 stretch occupies residues 1–1470 (MVAGMLMPRD…SELTTLTSQY (1470 aa)). A phosphoserine mark is found at Phe20 and Arg21. Position 26 is a phosphotyrosine (Val26). The residue at position 42 (Gly42) is a Phosphoserine. Thr113 is modified (phosphothreonine). Phosphoserine is present on residues Ser125 and Ser149. The disordered stretch occupies residues 144–179 (ELEEVSPETPVVPATTQRTLARPGPEPAPATDERDR). The actin-binding stretch occupies residues 175–400 (DERDRVQKKT…YVSSLYDAMP (226 aa)). Calponin-homology (CH) domains lie at 179 to 282 (RVQK…LHFQ) and 295 to 400 (MTAK…DAMP). The Spectrin 1 repeat unit spans residues 645 to 710 (LQSVQRRPEL…SIEEFRAKIE (66 aa)). Residue Ser720 is modified to Phosphoserine. Spectrin repeat units lie at residues 740-824 (KLLN…REDH) and 837-930 (LQTQ…AVVQ). Residues 941 to 998 (RGRLPLLAVCDYKQVEVTVHKGDECQLVGPAQPSHWKVLSSSGSEAAVPSVCFLVPPP) enclose the SH3 domain. The interval 964–4574 (ECQLVGPAQP…VGAYSKYLTC (3611 aa)) is required for interaction with intermediate filament proteins. Phosphoserine is present on Ser1047. One copy of the Spectrin 4 repeat lies at 1315-1415 (RERVAQLLER…QRFAKQYINA (101 aa)). Ser1435 is modified (phosphoserine). Positions 1469–2756 (QYIKFISETL…AHSEEVTASQ (1288 aa)) form a coiled coil. The interval 1471–2755 (IKFISETLRR…LAHSEEVTAS (1285 aa)) is central fibrous rod domain. The tract at residues 1618-1650 (RAEEAEAQKRQAQEEAERLRRQVQDESQRKRQA) is disordered. Ser1721 is subject to Phosphoserine. An N6-acetyllysine modification is found at Lys1725. Ser1732 bears the Phosphoserine mark. Disordered regions lie at residues 1794–1836 (LAQA…KQRQ), 2105–2139 (EAAR…EAAR), and 2217–2307 (RGEA…MEKH). Basic and acidic residues-rich tracts occupy residues 1798-1836 (EAEK…KQRQ), 2105-2128 (EAAR…ERVQ), and 2217-2258 (RGEA…KQSA). The segment covering 2259–2272 (EEQAQARAQAQAAA) has biased composition (low complexity). Residues 2273-2288 (EKLRKEAEQEAARRAQ) show a composition bias toward basic and acidic residues. At Ser2631 the chain carries Phosphoserine. At Lys2636 the chain carries N6-acetyllysine. Disordered stretches follow at residues 2668–2707 (REEQ…RRKQ) and 2763–2784 (LPNG…HSFD). Basic and acidic residues predominate over residues 2679–2707 (EQERQRLVASMEEARRRQHEAEEGVRRKQ). Residues 2756–4684 (QVAATKTLPN…SLGGPESAVA (1929 aa)) form a globular 2 region. Ser2782 and Ser2802 each carry phosphoserine. Plectin repeat units follow at residues 2826-2863 (RHYL…PGTA), 2864-2901 (LILL…PELH), 2902-2939 (HKLL…REHG), 2940-2977 (IRLL…EEMN), and 2981-3015 (ADPS…PETG). Phosphothreonine is present on Thr2886. Tyr3033 carries the phosphotyrosine modification. Ser3036 carries the post-translational modification Phosphoserine. An N6-acetyllysine mark is found at Lys3053 and Lys3091. 6 Plectin repeats span residues 3116-3153 (SLVP…VDTV), 3154-3191 (RRAL…SDMA), 3192-3229 (VALL…PEFH), 3230-3267 (EKLL…REQG), 3268-3305 (LRLL…EETS), and 3306-3343 (RALS…QLTG). The interval 3310 to 3331 (APRADAKAYSDPSTGEPATYGE) is disordered. Phosphotyrosine is present on Tyr3362. An N6-acetyllysine modification is found at Lys3420. Plectin repeat units follow at residues 3485–3522 (RTLL…ATTA), 3523–3560 (ALLL…PELH), 3561–3598 (EQLL…RQHG), 3599–3636 (IRLL…EEMN), and 3640–3674 (ADPS…PETG). At Ser3580 the chain carries Phosphoserine. The residue at position 3785 (Thr3785) is a Phosphothreonine. 5 Plectin repeats span residues 3820-3857 (WCYL…AEVA), 3858-3895 (RLLL…PELH), 3896-3933 (DRLL…TEEA), 3934-3971 (LRLL…KDTH), and 3975-4008 (SEPS…DGTG). The tract at residues 3956 to 4293 (PLEVAYQRGY…ETGKEMSVYE (338 aa)) is required for interaction with type2 keratins, DES and VIM. Residue Thr4030 is modified to Phosphothreonine. At Ser4054 the chain carries Phosphoserine. 7 Plectin repeats span residues 4063 to 4100 (QKFL…PGTA), 4101 to 4138 (FELL…PEFK), 4139 to 4176 (DKLL…KDHG), 4177 to 4214 (IRLL…EEMN), 4218 to 4252 (TDPS…PQTG), 4265 to 4305 (RKTS…HQTY), and 4319 to 4356 (TISS…RSAL). The tract at residues 4250–4300 (QTGLCLLPLKEKKRERKTSSKSSVRKRRVVIVDPETGKEMSVYEAYRKGLI) is binding to intermediate filaments. A phosphoserine mark is found at Ser4382, Ser4384, Ser4385, Ser4386, Ser4389, Ser4390, Ser4391, and Ser4392. The residue at position 4393 (Tyr4393) is a Phosphotyrosine. 3 positions are modified to phosphoserine: Ser4396, Ser4400, and Ser4406. Plectin repeat units lie at residues 4408–4445 (SDPT…NITG), 4446–4483 (QRLL…KIMV), 4484–4521 (DRIN…YEAG), 4522–4559 (QRFL…ARTA), and 4560–4597 (QKLR…EGTG). Phosphothreonine is present on Thr4411. A required for efficient interaction with KRT5 and KRT14 heterodimers region spans residues 4505 to 4574 (MSAAQALKKG…VGAYSKYLTC (70 aa)). Phosphothreonine; by CDK1 is present on Thr4539. Phosphoserine occurs at positions 4607 and 4613. A compositionally biased stretch (low complexity) spans 4611 to 4678 (YYSPYSVSGS…ASGSSASLGG (68 aa)). The disordered stretch occupies residues 4611 to 4684 (YYSPYSVSGS…SLGGPESAVA (74 aa)). A Phosphotyrosine modification is found at Tyr4615. Phosphoserine is present on residues Ser4616, Ser4618, and Ser4622. Phosphothreonine is present on Thr4623. Positions 4625-4640 (GSRTGSRTGSRAGSRR) are 4 X 4 AA tandem repeats of G-S-R-X. Ser4626 bears the Phosphoserine mark. Arg4627 and Arg4640 each carry omega-N-methylarginine. Ser4642, Ser4672, and Ser4675 each carry phosphoserine.

This sequence belongs to the plakin or cytolinker family. Homodimer or homotetramer. Interacts (via actin-binding domain) with SYNE3. Interacts (via calponin-homology (CH) 1 domain) with VIM (via rod region). Interacts (via N-terminus) with DST isoform 2 (via N-terminus). Interacts with FER. Interacts with TOR1A. Interacts with ANK3. Identified in complexes that contain VIM, EZR, AHNAK, BFSP1, BFSP2, ANK2, PLEC, PRX and spectrin. Interacts with COL17A1. In terms of assembly, interacts with KRT14, heterodimers consisting of KRT8 and KRT18, heterodimers consisting of KRT5 and KRT14, heterodimers consisting of KRT14 and KRT15, and heterodimers consisting of KRT1 and KRT10. Interacts with DES and VIM. Post-translationally, phosphorylated by CDK1; regulates dissociation from intermediate filaments during mitosis. As to expression, widely expressed with highest levels in muscle, heart, placenta and spinal cord.

It is found in the cytoplasm. Its subcellular location is the cytoskeleton. The protein resides in the cell junction. The protein localises to the hemidesmosome. It localises to the cell projection. It is found in the podosome. In terms of biological role, interlinks intermediate filaments with microtubules and microfilaments and anchors intermediate filaments to desmosomes or hemidesmosomes. Could also bind muscle proteins such as actin to membrane complexes in muscle. May be involved not only in the filaments network, but also in the regulation of their dynamics. Structural component of muscle. Isoform 9 plays a major role in the maintenance of myofiber integrity. The chain is Plectin (PLEC) from Homo sapiens (Human).